Here is a 539-residue protein sequence, read N- to C-terminus: Chaperonin GroEL (539 aa).

Residues Thr-29–Pro-32, Asp-86–Thr-90, Gly-414, and Asp-493 each bind ATP.

It belongs to the chaperonin (HSP60) family. In terms of assembly, forms a cylinder of 14 subunits composed of two heptameric rings stacked back-to-back. Interacts with the co-chaperonin GroES.

It localises to the cytoplasm. The catalysed reaction is ATP + H2O + a folded polypeptide = ADP + phosphate + an unfolded polypeptide.. In terms of biological role, together with its co-chaperonin GroES, plays an essential role in assisting protein folding. The GroEL-GroES system forms a nano-cage that allows encapsulation of the non-native substrate proteins and provides a physical environment optimized to promote and accelerate protein folding. In Staphylococcus aureus, this protein is Chaperonin GroEL.